The primary structure comprises 215 residues: 3-demethoxyubiquinol 3-hydroxylase (215 aa).

Residues glutamate 64, glutamate 94, histidine 97, glutamate 146, glutamate 178, and histidine 181 each contribute to the Fe cation site.

The protein belongs to the COQ7 family. Requires Fe cation as cofactor.

Its subcellular location is the cell membrane. The catalysed reaction is a 5-methoxy-2-methyl-3-(all-trans-polyprenyl)benzene-1,4-diol + AH2 + O2 = a 3-demethylubiquinol + A + H2O. It functions in the pathway cofactor biosynthesis; ubiquinone biosynthesis. Its function is as follows. Catalyzes the hydroxylation of 2-nonaprenyl-3-methyl-6-methoxy-1,4-benzoquinol during ubiquinone biosynthesis. This chain is 3-demethoxyubiquinol 3-hydroxylase, found in Bordetella avium (strain 197N).